Here is an 83-residue protein sequence, read N- to C-terminus: Short neurotoxin D (83 aa).

The signal sequence occupies residues 1 to 21; sequence MKTLLLTLVVVTMVCLDLGYT. Intrachain disulfides connect cysteine 24-cysteine 45, cysteine 38-cysteine 62, cysteine 64-cysteine 75, and cysteine 76-cysteine 81.

This sequence belongs to the three-finger toxin family. Short-chain subfamily. Type I alpha-neurotoxin sub-subfamily. Expressed by the venom gland.

It localises to the secreted. Its function is as follows. Binds to muscle nicotinic acetylcholine receptor (nAChR) and inhibit acetylcholine from binding to the receptor, thereby impairing neuromuscular transmission. This Laticauda colubrina (Yellow-lipped sea krait) protein is Short neurotoxin D.